We begin with the raw amino-acid sequence, 399 residues long: CLOCK-interacting pacemaker (399 aa).

The span at 1–12 shows a compositional bias: basic and acidic residues; the sequence is MERKNSSRESPR. Disordered stretches follow at residues 1–85 and 159–224; these read MERK…AKNA and SYTK…KLAE. Position 213 is a phosphoserine (S213). A coiled-coil region spans residues 333–359; the sequence is TLKTKELIRQNQATQVELDQLKEQTQL. Polar residues predominate over residues 378–388; it reads SLTPGSSNTGS. The segment at 378-399 is disordered; it reads SLTPGSSNTGSDLEAFSDHPDI.

In terms of assembly, interacts with CLOCK. Forms a ternary complex with the CLOCK-BMAL1 heterodimer. Interacts with CAD and HSPA5.

The protein resides in the nucleus. It localises to the cytoplasm. It is found in the cytosol. Transcriptional repressor which may act as a negative-feedback regulator of CLOCK-BMAL1 transcriptional activity in the circadian-clock mechanism. May stimulate BMAL1-dependent phosphorylation of CLOCK. However, the physiological relevance of these observations is unsure, since experiments in knockout mice showed that CIPC is not critially required for basic circadian clock. This is CLOCK-interacting pacemaker (CIPC) from Pongo abelii (Sumatran orangutan).